The primary structure comprises 1562 residues: E3 ubiquitin-protein ligase listerin (1562 aa).

HEAT repeat units follow at residues S41–Q78, K127–A164, E175–L217, E262–K301, L304–T348, S495–S532, S555–S592, I813–C850, Y908–R945, F997–S1037, T1047–S1085, I1188–D1226, N1263–G1298, and L1299–P1339. Residues C1508–R1555 form an RING-type zinc finger.

It belongs to the LTN1 family. As to quaternary structure, component of the ribosome quality control complex (RQC), composed of the E3 ubiquitin ligase RKR1/LTN1, RQC1 and RQC2, as well as CDC48 and its ubiquitin-binding cofactors associated with the 60S ribosomal subunits.

The protein localises to the nucleus. It is found in the cytoplasm. It localises to the cytosol. It carries out the reaction S-ubiquitinyl-[E2 ubiquitin-conjugating enzyme]-L-cysteine + [acceptor protein]-L-lysine = [E2 ubiquitin-conjugating enzyme]-L-cysteine + N(6)-ubiquitinyl-[acceptor protein]-L-lysine.. Its pathway is protein modification; protein ubiquitination. Its function is as follows. E3 ubiquitin-protein ligase component of the ribosome quality control complex (RQC), a ribosome-associated complex that mediates ubiquitination and extraction of incompletely synthesized nascent chains for proteasomal degradation. Mediates ubiquitination of proteins derived from mRNAs lacking stop codons (non-stop proteins) and other translation arrest products induced by poly-lysine sequences and tandem rare codons. Ubiquitination leads to CDC48 recruitment for extraction and degradation of the incomplete translation product. May indirectly play a role in chromatin function and transcription. The polypeptide is E3 ubiquitin-protein ligase listerin (Saccharomyces cerevisiae (strain ATCC 204508 / S288c) (Baker's yeast)).